The sequence spans 456 residues: Exodeoxyribonuclease 7 large subunit (456 aa).

It belongs to the XseA family. As to quaternary structure, heterooligomer composed of large and small subunits.

It is found in the cytoplasm. The enzyme catalyses Exonucleolytic cleavage in either 5'- to 3'- or 3'- to 5'-direction to yield nucleoside 5'-phosphates.. In terms of biological role, bidirectionally degrades single-stranded DNA into large acid-insoluble oligonucleotides, which are then degraded further into small acid-soluble oligonucleotides. This is Exodeoxyribonuclease 7 large subunit from Shigella boydii serotype 4 (strain Sb227).